The following is an 84-amino-acid chain: Cytochrome b559 subunit alpha (84 aa).

Residues Ile-22–Phe-36 traverse the membrane as a helical segment. Residue His-24 participates in heme binding.

This sequence belongs to the PsbE/PsbF family. Heterodimer of an alpha subunit and a beta subunit. PSII is composed of 1 copy each of membrane proteins PsbA, PsbB, PsbC, PsbD, PsbE, PsbF, PsbH, PsbI, PsbJ, PsbK, PsbL, PsbM, PsbT, PsbX, Psb30/Ycf12, peripheral proteins PsbO, CyanoQ (PsbQ), PsbU, PsbV and a large number of cofactors. It forms dimeric complexes. Heme b is required as a cofactor.

The protein localises to the cell inner membrane. In terms of biological role, this b-type cytochrome is tightly associated with the reaction center of photosystem II (PSII). PSII is a light-driven water:plastoquinone oxidoreductase that uses light energy to abstract electrons from H(2)O, generating O(2) and a proton gradient subsequently used for ATP formation. It consists of a core antenna complex that captures photons, and an electron transfer chain that converts photonic excitation into a charge separation. The polypeptide is Cytochrome b559 subunit alpha (Gloeobacter violaceus (strain ATCC 29082 / PCC 7421)).